Here is a 57-residue protein sequence, read N- to C-terminus: uncharacterized protein (57 aa).

A helical membrane pass occupies residues 3 to 23 (PLTLLIIIGGVILGNELIISL). The segment at 38 to 57 (KHKHKTQENYETFASDKKRT) is disordered.

It localises to the host membrane. This is an uncharacterized protein from Acidianus bottle-shaped virus (isolate Italy/Pozzuoli) (ABV).